A 375-amino-acid chain; its full sequence is Queuine tRNA-ribosyltransferase (375 aa).

Catalysis depends on aspartate 90, which acts as the Proton acceptor. Substrate contacts are provided by residues 90–94, aspartate 144, glutamine 190, and glycine 217; that span reads DSGGF. Positions 248–254 are RNA binding; that stretch reads GIGTPHY. The active-site Nucleophile is the aspartate 267. Residues 272–276 form an RNA binding; important for wobble base 34 recognition region; sequence TRIAR. Residues cysteine 305, cysteine 307, cysteine 310, and histidine 336 each coordinate Zn(2+).

Belongs to the queuine tRNA-ribosyltransferase family. Homodimer. Within each dimer, one monomer is responsible for RNA recognition and catalysis, while the other monomer binds to the replacement base PreQ1. Zn(2+) serves as cofactor.

The enzyme catalyses 7-aminomethyl-7-carbaguanine + guanosine(34) in tRNA = 7-aminomethyl-7-carbaguanosine(34) in tRNA + guanine. It participates in tRNA modification; tRNA-queuosine biosynthesis. Its function is as follows. Catalyzes the base-exchange of a guanine (G) residue with the queuine precursor 7-aminomethyl-7-deazaguanine (PreQ1) at position 34 (anticodon wobble position) in tRNAs with GU(N) anticodons (tRNA-Asp, -Asn, -His and -Tyr). Catalysis occurs through a double-displacement mechanism. The nucleophile active site attacks the C1' of nucleotide 34 to detach the guanine base from the RNA, forming a covalent enzyme-RNA intermediate. The proton acceptor active site deprotonates the incoming PreQ1, allowing a nucleophilic attack on the C1' of the ribose to form the product. After dissociation, two additional enzymatic reactions on the tRNA convert PreQ1 to queuine (Q), resulting in the hypermodified nucleoside queuosine (7-(((4,5-cis-dihydroxy-2-cyclopenten-1-yl)amino)methyl)-7-deazaguanosine). This chain is Queuine tRNA-ribosyltransferase, found in Borrelia duttonii (strain Ly).